The sequence spans 193 residues: Dirigent protein (193 aa).

The N-terminal stretch at 1-29 (MGGEKAFSFIFLLFLCFFLANLSASSAHP) is a signal peptide. An intrachain disulfide couples Cys40 to Cys192. N-linked (GlcNAc...) asparagine glycans are attached at residues Asn59 and Asn129.

This sequence belongs to the plant dirigent protein family. In terms of assembly, homodimer. Expressed in rhizomes, stems, and leaves.

The protein localises to the secreted. It is found in the extracellular space. It localises to the apoplast. It participates in aromatic compound metabolism; phenylpropanoid biosynthesis. Dirigent proteins impart stereoselectivity on the phenoxy radical-coupling reaction, yielding optically active lignans from two molecules of coniferyl alcohol in the biosynthesis of lignans, flavonolignans, and alkaloids and thus plays a central role in plant secondary metabolism. Also involved in the biosynthesis of etoposide, a chemotherapeutic compound of the topoisomerase inhibitor family. This is Dirigent protein from Sinopodophyllum hexandrum (Himalayan may apple).